A 396-amino-acid chain; its full sequence is L-lactate dehydrogenase (396 aa).

The FMN hydroxy acid dehydrogenase domain maps to 1–380; the sequence is MIISAASDYR…TQDSLVQGLG (380 aa). Y24 serves as a coordination point for substrate. Residues S106 and Q127 each contribute to the FMN site. Y129 is a substrate binding site. T155 contributes to the FMN binding site. R164 contacts substrate. K251 is an FMN binding site. The active-site Proton acceptor is the H275. Residue R278 participates in substrate binding. Residue 306–330 participates in FMN binding; the sequence is DSGIRNGLDVVRMIALGADTVLLGR.

The protein belongs to the FMN-dependent alpha-hydroxy acid dehydrogenase family. It depends on FMN as a cofactor.

Its subcellular location is the cell inner membrane. It carries out the reaction (S)-lactate + A = pyruvate + AH2. Catalyzes the conversion of L-lactate to pyruvate. Is coupled to the respiratory chain. The protein is L-lactate dehydrogenase of Shigella boydii serotype 4 (strain Sb227).